We begin with the raw amino-acid sequence, 151 residues long: Large ribosomal subunit protein bL9 (151 aa).

Belongs to the bacterial ribosomal protein bL9 family.

Functionally, binds to the 23S rRNA. This is Large ribosomal subunit protein bL9 from Bordetella petrii (strain ATCC BAA-461 / DSM 12804 / CCUG 43448).